A 377-amino-acid polypeptide reads, in one-letter code: Circumsporozoite protein (377 aa).

An N-terminal signal peptide occupies residues M1–C22. The disordered stretch occupies residues H51–E294. A compositionally biased stretch (basic and acidic residues) spans D72–D100. The required for the binding to heparan sulfate proteoglycans (HSPGs) on the surface of host hepatocytes stretch occupies residues K80 to R88. The tract at residues K91–P95 is region I; contains the proteolytic cleavage site. 20 consecutive repeat copies span residues P95–P103, A104–P112, A113–P121, A122–P130, A131–P139, A140–P148, A149–P157, A158–P166, A167–P175, A176–P184, A185–P193, A194–P202, A203–P211, A212–P220, A221–P229, A230–P238, A239–P247, A248–P256, A257–A265, and A266–A274. The interval P95–A274 is 20 X 9 AA tandem repeats of [PA]-G-D-R-A-[DA]-G-Q-[PA]. Low complexity predominate over residues G236–Q273. Over residues A274–G283 the composition is skewed to gly residues. Positions Q284–N293 are enriched in low complexity. The TSP type-1 domain maps to K303–A355. 2 disulfides stabilise this stretch: C315–C349 and C319–C354. An O-linked (Fuc) threonine glycan is attached at T318. The GPI-anchor amidated cysteine moiety is linked to residue C354. Positions A355–N377 are cleaved as a propeptide — removed in mature form.

This sequence belongs to the plasmodium circumsporozoite protein family. During host cell invasion, proteolytically cleaved at the cell membrane in the region I by a papain-like cysteine protease of parasite origin. Cleavage is triggered by the sporozoite contact with highly sulfated heparan sulfate proteoglycans (HSPGs) present on the host hepatocyte cell surface. Cleavage exposes the TSP type-1 (TSR) domain and is required for productive invasion of host hepatocytes but not for adhesion to the host cell membrane. Cleavage is dispensable for sporozoite development in the oocyst, motility and for traversal of host and vector cells. In terms of processing, O-glycosylated; maybe by POFUT2.

The protein resides in the cell membrane. The protein localises to the cytoplasm. Functionally, essential sporozoite protein. In the mosquito vector, required for sporozoite development in the oocyst, migration through the vector hemolymph and entry into the vector salivary glands. In the vertebrate host, required for sporozoite migration through the host dermis and infection of host hepatocytes. Binds to highly sulfated heparan sulfate proteoglycans (HSPGs) on the surface of host hepatocytes. Its function is as follows. In the vertebrate host, binds to highly sulfated heparan sulfate proteoglycans (HSPGs) on the surface of host hepatocytes and is required for sporozoite invasion of the host hepatocytes. The sequence is that of Circumsporozoite protein from Plasmodium vivax (strain Salvador I).